The chain runs to 121 residues: Regulator of ribonuclease activity B (121 aa).

It belongs to the RraB family. As to quaternary structure, interacts with the C-terminal region of Rne.

It is found in the cytoplasm. Functionally, globally modulates RNA abundance by binding to RNase E (Rne) and regulating its endonucleolytic activity. Can modulate Rne action in a substrate-dependent manner by altering the composition of the degradosome. The sequence is that of Regulator of ribonuclease activity B from Psychromonas ingrahamii (strain DSM 17664 / CCUG 51855 / 37).